The following is a 108-amino-acid chain: Cell cycle protein GpsB (108 aa).

Positions 32–69 (LDNVIKDYENFNAQIEALKAENEALKKAKYQARNTVSA) form a coiled coil.

The protein belongs to the GpsB family. Forms polymers through the coiled coil domains. Interacts with PBP1, MreC and EzrA.

It is found in the cytoplasm. In terms of biological role, divisome component that associates with the complex late in its assembly, after the Z-ring is formed, and is dependent on DivIC and PBP2B for its recruitment to the divisome. Together with EzrA, is a key component of the system that regulates PBP1 localization during cell cycle progression. Its main role could be the removal of PBP1 from the cell pole after pole maturation is completed. Also contributes to the recruitment of PBP1 to the division complex. Not essential for septum formation. The chain is Cell cycle protein GpsB from Streptococcus pyogenes serotype M49 (strain NZ131).